The chain runs to 577 residues: Phosphoenolpyruvate-protein phosphotransferase (577 aa).

His-191 functions as the Tele-phosphohistidine intermediate in the catalytic mechanism. 2 residues coordinate phosphoenolpyruvate: Arg-298 and Arg-334. Residues Glu-435 and Asp-459 each coordinate Mg(2+). Phosphoenolpyruvate contacts are provided by residues 458-459 and Arg-469; that span reads ND. Residue Cys-506 is the Proton donor of the active site.

It belongs to the PEP-utilizing enzyme family. In terms of assembly, homodimer. The cofactor is Mg(2+).

It localises to the cytoplasm. It carries out the reaction L-histidyl-[protein] + phosphoenolpyruvate = N(pros)-phospho-L-histidyl-[protein] + pyruvate. Its function is as follows. General (non sugar-specific) component of the phosphoenolpyruvate-dependent sugar phosphotransferase system (sugar PTS). This major carbohydrate active-transport system catalyzes the phosphorylation of incoming sugar substrates concomitantly with their translocation across the cell membrane. Enzyme I transfers the phosphoryl group from phosphoenolpyruvate (PEP) to the phosphoryl carrier protein (HPr). The chain is Phosphoenolpyruvate-protein phosphotransferase (ptsI) from Streptococcus equinus (Streptococcus bovis).